The following is a 437-amino-acid chain: Dihydrofolate synthase/folylpolyglutamate synthase (437 aa).

Position 28–30 (Asp-28–Gly-30) interacts with 7,8-dihydropteroate. Gly-58–Thr-61 is an ATP binding site. Ser-82 contacts Mg(2+). Thr-120–Glu-123 lines the 7,8-dihydropteroate pocket. Glu-144 is a Mg(2+) binding site. A 7,8-dihydropteroate-binding site is contributed by Leu-151–Ala-153. A Mg(2+)-binding site is contributed by His-171. ATP is bound by residues Asn-255, Arg-287, and Asp-316.

This sequence belongs to the folylpolyglutamate synthase family. Monomer. The cofactor is Mg(2+).

The enzyme catalyses 7,8-dihydropteroate + L-glutamate + ATP = 7,8-dihydrofolate + ADP + phosphate + H(+). The catalysed reaction is (6S)-5,6,7,8-tetrahydrofolyl-(gamma-L-Glu)(n) + L-glutamate + ATP = (6S)-5,6,7,8-tetrahydrofolyl-(gamma-L-Glu)(n+1) + ADP + phosphate + H(+). It catalyses the reaction 10-formyltetrahydrofolyl-(gamma-L-Glu)(n) + L-glutamate + ATP = 10-formyltetrahydrofolyl-(gamma-L-Glu)(n+1) + ADP + phosphate + H(+). It carries out the reaction (6R)-5,10-methylenetetrahydrofolyl-(gamma-L-Glu)(n) + L-glutamate + ATP = (6R)-5,10-methylenetetrahydrofolyl-(gamma-L-Glu)(n+1) + ADP + phosphate + H(+). It functions in the pathway cofactor biosynthesis; tetrahydrofolate biosynthesis; 7,8-dihydrofolate from 2-amino-4-hydroxy-6-hydroxymethyl-7,8-dihydropteridine diphosphate and 4-aminobenzoate: step 2/2. It participates in cofactor biosynthesis; tetrahydrofolylpolyglutamate biosynthesis. Functions in two distinct reactions of the de novo folate biosynthetic pathway. Catalyzes the addition of a glutamate residue to dihydropteroate (7,8-dihydropteroate or H2Pte) to form dihydrofolate (7,8-dihydrofolate monoglutamate or H2Pte-Glu). Also catalyzes successive additions of L-glutamate to tetrahydrofolate or 10-formyltetrahydrofolate or 5,10-methylenetetrahydrofolate, leading to folylpolyglutamate derivatives. In Haemophilus influenzae (strain ATCC 51907 / DSM 11121 / KW20 / Rd), this protein is Dihydrofolate synthase/folylpolyglutamate synthase (folC).